A 364-amino-acid polypeptide reads, in one-letter code: Serpentine receptor class epsilon-27 (364 aa).

Helical transmembrane passes span 31 to 51 (VIAS…VVSL), 64 to 84 (FIIL…GKLI), 125 to 145 (LLII…FGAV), 167 to 187 (IFIP…CSCL), 195 to 215 (IITI…VFFL), 257 to 277 (LIFS…TLLL), and 290 to 310 (NALF…IPAW).

The protein belongs to the nematode receptor-like protein sre family.

It is found in the membrane. The sequence is that of Serpentine receptor class epsilon-27 (sre-27) from Caenorhabditis elegans.